The chain runs to 328 residues: Malate dehydrogenase (328 aa).

11 to 17 (GAAGQIG) contacts NAD(+). Positions 92 and 98 each coordinate substrate. NAD(+) is bound by residues Asn-105, Gln-112, and 129 to 131 (VGN). Residues Asn-131 and Arg-162 each contribute to the substrate site. His-187 serves as the catalytic Proton acceptor.

Belongs to the LDH/MDH superfamily. MDH type 2 family.

The catalysed reaction is (S)-malate + NAD(+) = oxaloacetate + NADH + H(+). In terms of biological role, catalyzes the reversible oxidation of malate to oxaloacetate. The protein is Malate dehydrogenase of Coxiella burnetii (strain CbuK_Q154) (Coxiella burnetii (strain Q154)).